A 298-amino-acid chain; its full sequence is Succinate dehydrogenase [ubiquinone] iron-sulfur subunit, mitochondrial (298 aa).

The region spanning 59–147 (YRFNPEAPGA…STKIYPLPHM (89 aa)) is the 2Fe-2S ferredoxin-type domain. Residues C107, C112, C115, and C127 each contribute to the [2Fe-2S] cluster site. The 4Fe-4S ferredoxin-type domain maps to 190–220 (ERDRLDGLYECILCACCSTSCPSYWWNADKY). [4Fe-4S] cluster-binding residues include C200, C203, and C206. C210 is a [3Fe-4S] cluster binding site. Position 215 (W215) interacts with a ubiquinone. C257 and C263 together coordinate [3Fe-4S] cluster. C267 is a [4Fe-4S] cluster binding site.

This sequence belongs to the succinate dehydrogenase/fumarate reductase iron-sulfur protein family. As to quaternary structure, component of complex II composed of four subunits: a flavoprotein (FP), an iron-sulfur protein (IP), and a cytochrome b composed of a large and a small subunit. [2Fe-2S] cluster is required as a cofactor. The cofactor is [3Fe-4S] cluster. [4Fe-4S] cluster serves as cofactor.

Its subcellular location is the mitochondrion inner membrane. The enzyme catalyses a quinone + succinate = fumarate + a quinol. It functions in the pathway carbohydrate metabolism; tricarboxylic acid cycle; fumarate from succinate (eukaryal route): step 1/1. Iron-sulfur protein (IP) subunit of succinate dehydrogenase (SDH) that is involved in complex II of the mitochondrial electron transport chain and is responsible for transferring electrons from succinate to ubiquinone (coenzyme Q). The polypeptide is Succinate dehydrogenase [ubiquinone] iron-sulfur subunit, mitochondrial (sdhb-1) (Caenorhabditis elegans).